A 488-amino-acid chain; its full sequence is Ribulose bisphosphate carboxylase large chain 1 (488 aa).

Substrate is bound by residues Asn-128 and Thr-178. Catalysis depends on Lys-180, which acts as the Proton acceptor. Substrate is bound at residue Lys-182. Mg(2+) is bound by residues Lys-206, Asp-208, and Glu-209. An N6-carboxylysine modification is found at Lys-206. His-298 acts as the Proton acceptor in catalysis. Arg-299, His-331, and Ser-383 together coordinate substrate.

This sequence belongs to the RuBisCO large chain family. Type I subfamily. In terms of assembly, heterohexadecamer of 8 large chains and 8 small chains. Mg(2+) serves as cofactor.

It carries out the reaction 2 (2R)-3-phosphoglycerate + 2 H(+) = D-ribulose 1,5-bisphosphate + CO2 + H2O. The enzyme catalyses D-ribulose 1,5-bisphosphate + O2 = 2-phosphoglycolate + (2R)-3-phosphoglycerate + 2 H(+). In terms of biological role, ruBisCO catalyzes two reactions: the carboxylation of D-ribulose 1,5-bisphosphate, the primary event in carbon dioxide fixation, as well as the oxidative fragmentation of the pentose substrate. Both reactions occur simultaneously and in competition at the same active site. The chain is Ribulose bisphosphate carboxylase large chain 1 from Methylibium petroleiphilum (strain ATCC BAA-1232 / LMG 22953 / PM1).